Here is a 378-residue protein sequence, read N- to C-terminus: MADIQLSKYHVSKDIGFLLEPLQDVLPDYFEPWNRLAKSLPELVASHKFRDAVKEMPLLDQSKLAGYRQKRLAHLQLVLITSGYLWQEGEGGAVQRLPECVSKPLWNVSNDLGLKPVLTFADICLTNCKVKNGDIEVMYNLPGGAGTEWFLKVCGLVELAFGKSGQAIQNVLDGAKANDKAKMASGFTDLTAAIGNMQTALARMNENLTPEHFYNGVRPFLNGFGGPASPISGGLVYEGVSDKPVTMIGGSAAQSSTMQVLDGLLGITHSPEKQAFLDEIRNYMPPSHKQMLADLTNMPRKVPQVVAETKDANLTKAFNGCVAAFVQYRSYHIQVVTKYIVTASKSDSPKSLAYKDTGKSDLIPFLKEVRDDTEKVQQ.

Residue histidine 332 coordinates heme.

It belongs to the indoleamine 2,3-dioxygenase family. As to quaternary structure, homodimer. Heme serves as cofactor.

Its function is as follows. Serves a reserve supply of oxygen and facilitates the movement of oxygen within muscles. This chain is Myoglobin, found in Haliotis madaka (Giant abalone).